Reading from the N-terminus, the 387-residue chain is Alanine racemase (387 aa).

The active-site Proton acceptor; specific for D-alanine is the K38. N6-(pyridoxal phosphate)lysine is present on K38. R136 contributes to the substrate binding site. Y267 functions as the Proton acceptor; specific for L-alanine in the catalytic mechanism. M315 contributes to the substrate binding site.

It belongs to the alanine racemase family. Requires pyridoxal 5'-phosphate as cofactor.

The enzyme catalyses L-alanine = D-alanine. The protein operates within amino-acid biosynthesis; D-alanine biosynthesis; D-alanine from L-alanine: step 1/1. In terms of biological role, catalyzes the interconversion of L-alanine and D-alanine. May also act on other amino acids. This Clostridium novyi (strain NT) protein is Alanine racemase (alr).